Here is a 302-residue protein sequence, read N- to C-terminus: Sulfate adenylyltransferase subunit 2 (302 aa).

The protein belongs to the PAPS reductase family. CysD subfamily. In terms of assembly, heterodimer composed of CysD, the smaller subunit, and CysN.

It carries out the reaction sulfate + ATP + H(+) = adenosine 5'-phosphosulfate + diphosphate. It participates in sulfur metabolism; hydrogen sulfide biosynthesis; sulfite from sulfate: step 1/3. Its function is as follows. With CysN forms the ATP sulfurylase (ATPS) that catalyzes the adenylation of sulfate producing adenosine 5'-phosphosulfate (APS) and diphosphate, the first enzymatic step in sulfur assimilation pathway. APS synthesis involves the formation of a high-energy phosphoric-sulfuric acid anhydride bond driven by GTP hydrolysis by CysN coupled to ATP hydrolysis by CysD. This Escherichia coli O157:H7 (strain EC4115 / EHEC) protein is Sulfate adenylyltransferase subunit 2.